The following is a 206-amino-acid chain: Large ribosomal subunit protein uL4 (206 aa).

Positions 47 to 75 (GTQSAKTRAEVSGGGIKPWRQKGTGRARQ) are disordered.

The protein belongs to the universal ribosomal protein uL4 family. In terms of assembly, part of the 50S ribosomal subunit.

One of the primary rRNA binding proteins, this protein initially binds near the 5'-end of the 23S rRNA. It is important during the early stages of 50S assembly. It makes multiple contacts with different domains of the 23S rRNA in the assembled 50S subunit and ribosome. Functionally, forms part of the polypeptide exit tunnel. The protein is Large ribosomal subunit protein uL4 of Clostridium botulinum (strain 657 / Type Ba4).